The following is a 425-amino-acid chain: Aromatic prenyl transferase ptmE (425 aa).

Residues 83 to 84 (GI) and glutamate 92 contribute to the L-tryptophan site. 9 residues coordinate substrate: arginine 107, lysine 198, tyrosine 200, arginine 265, lysine 267, tyrosine 269, tyrosine 345, tyrosine 410, and tyrosine 414.

The protein belongs to the tryptophan dimethylallyltransferase family. In terms of assembly, homodimer.

It functions in the pathway secondary metabolite biosynthesis. Its function is as follows. Aromatic prenyl transferase; part of the gene cluster that mediates the biosynthesis of the indole diterpenes penitrems. The geranylgeranyl diphosphate (GGPP) synthase ptmG catalyzes the first step in penitrem biosynthesis via conversion of farnesyl pyrophosphate and isopentyl pyrophosphate into geranylgeranyl pyrophosphate (GGPP). Condensation of indole-3-glycerol phosphate with GGPP by the prenyl transferase ptmC then forms 3-geranylgeranylindole (3-GGI). Epoxidation by the FAD-dependent monooxygenase ptmM leads to a epoxidized-GGI that is substrate of the terpene cyclase ptmB for cyclization to yield paspaline. Paspaline is subsequently converted to 13-desoxypaxilline by the cytochrome P450 monooxygenase ptmP, the latter being then converted to paxilline by the cytochrome P450 monooxygenase ptmQ. Paxilline is converted to beta-paxitriol via C-10 ketoreduction by the short-chain dehydrogenase ptmH which can be monoprenylated at the C-20 by the indole diterpene prenyltransferase ptmD. A two-step elimination (acetylation and elimination) process performed by the O-acetyltransferase ptmV and ptmI leads to the production of the prenylated form of penijanthine. The FAD-linked oxidoreductase ptmO then converts the prenylated form of penijanthine into PC-M5 which is in turn transformed into PC-M4 by the aromatic dimethylallyltransferase ptmE. Five sequential oxidative transformations performed by the cytochrome P450 monooxygenases ptmK, ptmU, ptmL, ptmN and ptmJ yield the various penitrem compounds. PtmK, ptmU and ptmM are involved in the formation of the key bicyclic ring of penitrem C via the formation of the intermediates secopenitrem D and penitrem D. PtmL catalyzes the epoxidation of penitrem D and C to yield penitrem B and F, respectively. PtmJ catalyzes the last benzylic hydroxylation to convert penitrem B to prenitrem E and penitrem F to penitrem A. In Penicillium ochrochloron, this protein is Aromatic prenyl transferase ptmE.